The chain runs to 225 residues: Imidazole glycerol phosphate synthase subunit HisH (225 aa).

The 216-residue stretch at 5-220 (KNVIVDTGCA…LELDSTELNQ (216 aa)) folds into the Glutamine amidotransferase type-1 domain. The Nucleophile role is filled by Cys80. Active-site residues include His195 and Glu197.

Heterodimer of HisH and HisF.

The protein resides in the cytoplasm. It catalyses the reaction 5-[(5-phospho-1-deoxy-D-ribulos-1-ylimino)methylamino]-1-(5-phospho-beta-D-ribosyl)imidazole-4-carboxamide + L-glutamine = D-erythro-1-(imidazol-4-yl)glycerol 3-phosphate + 5-amino-1-(5-phospho-beta-D-ribosyl)imidazole-4-carboxamide + L-glutamate + H(+). The catalysed reaction is L-glutamine + H2O = L-glutamate + NH4(+). It functions in the pathway amino-acid biosynthesis; L-histidine biosynthesis; L-histidine from 5-phospho-alpha-D-ribose 1-diphosphate: step 5/9. In terms of biological role, IGPS catalyzes the conversion of PRFAR and glutamine to IGP, AICAR and glutamate. The HisH subunit catalyzes the hydrolysis of glutamine to glutamate and ammonia as part of the synthesis of IGP and AICAR. The resulting ammonia molecule is channeled to the active site of HisF. The sequence is that of Imidazole glycerol phosphate synthase subunit HisH from Colwellia psychrerythraea (strain 34H / ATCC BAA-681) (Vibrio psychroerythus).